The primary structure comprises 648 residues: DNA ligase (648 aa).

Residues 30 to 34 (DEEYD), 79 to 80 (SM), and E108 each bind NAD(+). K110 (N6-AMP-lysine intermediate) is an active-site residue. Positions 131, 165, 280, and 304 each coordinate NAD(+). Residues C398, C401, C414, and C419 each coordinate Zn(2+). One can recognise a BRCT domain in the interval 573-648 (AKENPFKGKI…LTEDEMRAML (76 aa)).

The protein belongs to the NAD-dependent DNA ligase family. LigA subfamily. Requires Mg(2+) as cofactor. The cofactor is Mn(2+).

It catalyses the reaction NAD(+) + (deoxyribonucleotide)n-3'-hydroxyl + 5'-phospho-(deoxyribonucleotide)m = (deoxyribonucleotide)n+m + AMP + beta-nicotinamide D-nucleotide.. DNA ligase that catalyzes the formation of phosphodiester linkages between 5'-phosphoryl and 3'-hydroxyl groups in double-stranded DNA using NAD as a coenzyme and as the energy source for the reaction. It is essential for DNA replication and repair of damaged DNA. This chain is DNA ligase, found in Sulfurovum sp. (strain NBC37-1).